Here is a 458-residue protein sequence, read N- to C-terminus: Exodeoxyribonuclease 7 large subunit (458 aa).

Belongs to the XseA family. Heterooligomer composed of large and small subunits.

The protein localises to the cytoplasm. It carries out the reaction Exonucleolytic cleavage in either 5'- to 3'- or 3'- to 5'-direction to yield nucleoside 5'-phosphates.. Functionally, bidirectionally degrades single-stranded DNA into large acid-insoluble oligonucleotides, which are then degraded further into small acid-soluble oligonucleotides. The sequence is that of Exodeoxyribonuclease 7 large subunit from Halalkalibacterium halodurans (strain ATCC BAA-125 / DSM 18197 / FERM 7344 / JCM 9153 / C-125) (Bacillus halodurans).